Here is a 291-residue protein sequence, read N- to C-terminus: Glycine--tRNA ligase alpha subunit (291 aa).

The protein belongs to the class-II aminoacyl-tRNA synthetase family. In terms of assembly, tetramer of two alpha and two beta subunits.

Its subcellular location is the cytoplasm. It carries out the reaction tRNA(Gly) + glycine + ATP = glycyl-tRNA(Gly) + AMP + diphosphate. The protein is Glycine--tRNA ligase alpha subunit of Microcystis aeruginosa (strain NIES-843 / IAM M-2473).